A 126-amino-acid polypeptide reads, in one-letter code: Large ribosomal subunit protein bL12 (126 aa).

This sequence belongs to the bacterial ribosomal protein bL12 family. As to quaternary structure, homodimer. Part of the ribosomal stalk of the 50S ribosomal subunit. Forms a multimeric L10(L12)X complex, where L10 forms an elongated spine to which 2 to 4 L12 dimers bind in a sequential fashion. Binds GTP-bound translation factors.

Its function is as follows. Forms part of the ribosomal stalk which helps the ribosome interact with GTP-bound translation factors. Is thus essential for accurate translation. This chain is Large ribosomal subunit protein bL12, found in Chlorobaculum tepidum (strain ATCC 49652 / DSM 12025 / NBRC 103806 / TLS) (Chlorobium tepidum).